Here is a 966-residue protein sequence, read N- to C-terminus: Alpha-1,4 glucan phosphorylase L-1 isozyme, chloroplastic/amyloplastic (966 aa).

The transit peptide at Met-1–Asn-50 directs the protein to the chloroplast. An N6-(pyridoxal phosphate)lysine modification is found at Lys-812.

Belongs to the glycogen phosphorylase family. It depends on pyridoxal 5'-phosphate as a cofactor. Tuber.

It is found in the plastid. The protein resides in the chloroplast. It localises to the amyloplast. It catalyses the reaction [(1-&gt;4)-alpha-D-glucosyl](n) + phosphate = [(1-&gt;4)-alpha-D-glucosyl](n-1) + alpha-D-glucose 1-phosphate. In terms of biological role, phosphorylase is an important allosteric enzyme in carbohydrate metabolism. Enzymes from different sources differ in their regulatory mechanisms and in their natural substrates. However, all known phosphorylases share catalytic and structural properties. The chain is Alpha-1,4 glucan phosphorylase L-1 isozyme, chloroplastic/amyloplastic from Solanum tuberosum (Potato).